We begin with the raw amino-acid sequence, 960 residues long: Angiomotin-like protein 1 (960 aa).

A disordered region spans residues 196–248; it reads SQFFRGQQPPPPPPQQQPGAVGHSYYMAGGASQKARTEGRPTVSRANSGQAHK. S243, S271, and S297 each carry phosphoserine. A coiled-coil region spans residues 261–281; that stretch reads RSLSERIMQLSLERNGAKQHL. 3 disordered regions span residues 277–317, 381–407, and 413–432; these read AKQH…EYPF, LPFP…LHSV, and PPMA…SQQL. Low complexity predominate over residues 388–401; it reads QQHSPVSSQNSSVS. 2 coiled-coil regions span residues 440–641 and 667–697; these read VERA…WLER and ALME…VEES. Residue S722 is modified to Phosphoserine. Residues 731 to 761 adopt a coiled-coil conformation; sequence SLEAHIWQEEEEVVQATRRCQDMEYTIKNLH. Residues 775–826 are disordered; that stretch reads QQRSRKDAGKTDSSSLRPARSVPSIAAATGTHSRQTSLTSSQLAEERKEEKT. 3 positions are modified to phosphoserine: S795, S807, and S830. A compositionally biased stretch (polar residues) spans 804-817; the sequence is GTHSRQTSLTSSQL. The segment at 842–952 is disordered; that stretch reads NDHASTPLLP…NLLHKPEFPD (111 aa). Positions 845–870 are enriched in low complexity; that stretch reads ASTPLLPTPSAATLSPPTPGTSASSA. The span at 898-911 shows a compositional bias: polar residues; sequence PTRSRLSGTPSNSP. Residue S904 is modified to Phosphoserine. T906 is modified (phosphothreonine). S910 is modified (phosphoserine). The short motif at 957–960 is the PDZ-binding element; that stretch reads EVLI.

The protein belongs to the angiomotin family. In terms of processing, polyubiquitinated by NEDD4, leading to proteasomal degradation.

Its subcellular location is the cell junction. It localises to the tight junction. In terms of biological role, inhibits the Wnt/beta-catenin signaling pathway, probably by recruiting CTNNB1 to recycling endosomes and hence preventing its translocation to the nucleus. The chain is Angiomotin-like protein 1 (AMOTL1) from Bos taurus (Bovine).